We begin with the raw amino-acid sequence, 414 residues long: Isocitrate dehydrogenase [NADP] cytoplasmic (414 aa).

Position 2 is an N-acetylserine (Ser2). Position 42 is a phosphotyrosine (Tyr42). Residue 75–77 (TIT) participates in NADP(+) binding. Thr77 serves as a coordination point for substrate. N6-acetyllysine is present on Lys81. Arg82 contacts NADP(+). Substrate contacts are provided by residues 94–100 (SPNGTIR) and Arg109. Lys126 carries the post-translational modification N6-succinyllysine. The substrate site is built by Arg132 and Lys212. N6-acetyllysine occurs at positions 224, 233, and 243. Mn(2+) is bound at residue Asp252. Lys260 contributes to the NADP(+) binding site. Mn(2+) contacts are provided by Asp275 and Asp279. An NADP(+)-binding site is contributed by 310–315 (GTVTRH). At Lys321 the chain carries N6-acetyllysine. Asn328 contributes to the NADP(+) binding site. The residue at position 389 (Ser389) is a Phosphoserine. Lys400 carries the post-translational modification N6-succinyllysine.

Belongs to the isocitrate and isopropylmalate dehydrogenases family. Homodimer. It depends on Mg(2+) as a cofactor. Mn(2+) is required as a cofactor. Acetylation at Lys-374 dramatically reduces catalytic activity. In terms of tissue distribution, highly expressed in the liver followed by kidney, lower expression in spleen, brain and lung.

It is found in the cytoplasm. The protein localises to the cytosol. The catalysed reaction is D-threo-isocitrate + NADP(+) = 2-oxoglutarate + CO2 + NADPH. With respect to regulation, irreversibly inhibited by Cd(2+) concentrations above 50 uM. In terms of biological role, catalyzes the NADP(+)-dependent oxidative decarboxylation of isocitrate (D-threo-isocitrate) to 2-ketoglutarate (2-oxoglutarate), which is required by other enzymes such as the phytanoyl-CoA dioxygenase. Plays a critical role in the generation of NADPH, an important cofactor in many biosynthesis pathways. May act as a corneal epithelial crystallin and may be involved in maintaining corneal epithelial transparency. The protein is Isocitrate dehydrogenase [NADP] cytoplasmic (Idh1) of Mus musculus (Mouse).